The primary structure comprises 430 residues: Glutamate-1-semialdehyde 2,1-aminomutase (430 aa).

At Lys270 the chain carries N6-(pyridoxal phosphate)lysine.

Belongs to the class-III pyridoxal-phosphate-dependent aminotransferase family. HemL subfamily. In terms of assembly, homodimer. Requires pyridoxal 5'-phosphate as cofactor.

The protein resides in the cytoplasm. It carries out the reaction (S)-4-amino-5-oxopentanoate = 5-aminolevulinate. It functions in the pathway porphyrin-containing compound metabolism; protoporphyrin-IX biosynthesis; 5-aminolevulinate from L-glutamyl-tRNA(Glu): step 2/2. The sequence is that of Glutamate-1-semialdehyde 2,1-aminomutase from Cupriavidus necator (strain ATCC 17699 / DSM 428 / KCTC 22496 / NCIMB 10442 / H16 / Stanier 337) (Ralstonia eutropha).